The following is a 113-amino-acid chain: Beta-microseminoprotein A1 (113 aa).

The first 20 residues, 1–20, serve as a signal peptide directing secretion; that stretch reads MNVLLGGLVIFATFVTLCNG. Disulfide bonds link Cys22-Cys70, Cys38-Cys62, Cys57-Cys93, Cys60-Cys69, and Cys84-Cys107.

This sequence belongs to the beta-microseminoprotein family.

It is found in the secreted. In Saguinus oedipus (Cotton-top tamarin), this protein is Beta-microseminoprotein A1 (MSPA).